Consider the following 468-residue polypeptide: Probable Xaa-Pro aminopeptidase pepP (468 aa).

The Mn(2+) site is built by Asp-264, Asp-275, Glu-398, and Glu-438.

Belongs to the peptidase M24B family. Requires Mn(2+) as cofactor.

It catalyses the reaction Release of any N-terminal amino acid, including proline, that is linked to proline, even from a dipeptide or tripeptide.. Its function is as follows. Catalyzes the removal of a penultimate prolyl residue from the N-termini of peptides. The chain is Probable Xaa-Pro aminopeptidase pepP (pepP) from Talaromyces stipitatus (strain ATCC 10500 / CBS 375.48 / QM 6759 / NRRL 1006) (Penicillium stipitatum).